An 86-amino-acid chain; its full sequence is Anti-adapter protein IraP (86 aa).

A coiled-coil region spans residues 1 to 36; the sequence is MKNLIAELLFKLAQKEEESKELCAQVEALEIIVTAM.

Belongs to the IraP family. Interacts with RssB.

It localises to the cytoplasm. Its function is as follows. Inhibits RpoS proteolysis by regulating RssB activity, thereby increasing the stability of the sigma stress factor RpoS especially during phosphate starvation, but also in stationary phase and during nitrogen starvation. Its effect on RpoS stability is due to its interaction with RssB, which probably blocks the interaction of RssB with RpoS, and the consequent delivery of the RssB-RpoS complex to the ClpXP protein degradation pathway. The protein is Anti-adapter protein IraP of Shigella sonnei (strain Ss046).